The sequence spans 650 residues: SPARC-like protein 1 (650 aa).

Residues 1-16 (MKAVLLLLCALGTAVA) form the signal peptide. Residues 51–352 (TADIENHPSD…HGAGDDYFIP (302 aa)) form a disordered region. The span at 54–64 (IENHPSDKAEK) shows a compositional bias: basic and acidic residues. Phosphoserine occurs at positions 70, 78, and 86. The span at 75–85 (HEQSTEQDKTY) shows a compositional bias: basic and acidic residues. The span at 91–101 (LKDEEDGDGDL) shows a compositional bias: acidic residues. Composition is skewed to polar residues over residues 116–126 (EGTSEPQQKSL) and 135–148 (TVST…QRAN). Asparagine 148 carries an N-linked (GlcNAc...) asparagine glycan. 2 positions are modified to phosphoserine: serine 155 and serine 163. A compositionally biased stretch (polar residues) spans 157–174 (EQPVSDSHQQPNESSKQT). Asparagine 168 is a glycosylation site (N-linked (GlcNAc...) asparagine). Acidic residues predominate over residues 189–210 (IPNEEEEEEEDEEEEEEEEPED). Serine 272 carries the post-translational modification Phosphoserine. A compositionally biased stretch (basic and acidic residues) spans 277 to 299 (EDKAAGSKEHIPHTEQQDQEGKA). At serine 353 the chain carries Phosphoserine. The tract at residues 375 to 415 (EETTTGESENRREAADNQEAKKAESSPNAEPSDEGNSREHS) is disordered. A compositionally biased stretch (basic and acidic residues) spans 382–398 (SENRREAADNQEAKKAE). A Phosphoserine modification is found at serine 406. The 23-residue stretch at 418–440 (SCTNFQCKRGHICKTDPQGKPHC) folds into the Follistatin-like domain. 7 disulfides stabilise this stretch: cysteine 419–cysteine 430, cysteine 424–cysteine 440, cysteine 442–cysteine 476, cysteine 448–cysteine 469, cysteine 458–cysteine 495, cysteine 501–cysteine 612, and cysteine 620–cysteine 636. The Kazal-like domain maps to 436–497 (GKPHCVCQDP…QLDYFGACKS (62 aa)). An N-linked (GlcNAc...) asparagine glycan is attached at asparagine 462. Residues 608-643 (PMEHCITRFFEECDPNKDKHITLKEWGHCFGIKEED) form the EF-hand domain. Residues aspartate 621, asparagine 623, aspartate 625, histidine 627, and glutamate 632 each coordinate Ca(2+).

Belongs to the SPARC family. As to expression, highest expression in brain. Moderate levels in heart, adrenal gland, epididymis and lung. Low levels in kidney, eye, liver, spleen, submandibular gland and testis.

It localises to the secreted. The protein localises to the extracellular space. It is found in the extracellular matrix. This Mus musculus (Mouse) protein is SPARC-like protein 1 (Sparcl1).